Here is a 518-residue protein sequence, read N- to C-terminus: Dihydropyrimidinase 2 (518 aa).

3 residues coordinate Zn(2+): histidine 59, histidine 61, and lysine 152. Lysine 152 carries the N6-carboxylysine modification. Residue tyrosine 157 coordinates substrate. The Zn(2+) site is built by histidine 185 and histidine 241. A substrate-binding site is contributed by serine 291. Aspartate 319 lines the Zn(2+) pocket. Asparagine 340 serves as a coordination point for substrate.

It belongs to the metallo-dependent hydrolases superfamily. Hydantoinase/dihydropyrimidinase family. In terms of assembly, homotetramer. Zn(2+) is required as a cofactor. Carboxylation allows a single lysine to coordinate two zinc ions.

The catalysed reaction is 5,6-dihydrouracil + H2O = 3-(carbamoylamino)propanoate + H(+). The chain is Dihydropyrimidinase 2 (dhp-2) from Caenorhabditis briggsae.